The primary structure comprises 316 residues: Olfactory receptor 2AG2 (316 aa).

Residues 1 to 30 are Extracellular-facing; that stretch reads MELRNSTLGSGFILVGILNDSGSPELLYAT. N-linked (GlcNAc...) asparagine glycosylation is found at Asn-5 and Asn-19. The chain crosses the membrane as a helical span at residues 31–51; sequence FTILYMLALTSNGLLLLAITI. The Cytoplasmic segment spans residues 52–56; the sequence is EARLH. A helical membrane pass occupies residues 57-77; that stretch reads MPMYLLLGQLSLMDLLFTSVV. The Extracellular segment spans residues 78-97; the sequence is TPKALADFLRRENTISFGGC. An intrachain disulfide couples Cys-97 to Cys-179. A helical membrane pass occupies residues 98–118; sequence ALQMFLALTMGSAEDLLLAFM. At 119–139 the chain is on the cytoplasmic side; sequence AYDRYVAICHPLKYMTLMSPR. Residues 140–160 form a helical membrane-spanning segment; it reads VCWIMVATSWILASLIAIGHT. Topologically, residues 161–205 are extracellular; it reads MYTMHLPFCVSWEIRHLLCEIPPLLKLACADTSRYELIIYVTGVT. The helical transmembrane segment at 206–226 threads the bilayer; it reads FLLLPISAIVASYTLVLFTVL. Topologically, residues 227–244 are cytoplasmic; that stretch reads RMPSNEGRKKALVTCSSH. Residues 245 to 265 traverse the membrane as a helical segment; the sequence is LIVVGMFYGAATFMYVLPSSF. The Extracellular portion of the chain corresponds to 266–271; sequence HSPKQD. Residues 272–292 form a helical membrane-spanning segment; that stretch reads NIISVFYTIVTPALNPLIYSL. Residues 293–316 are Cytoplasmic-facing; sequence RNKEVMRALRRVLGKYILLAHSTL.

Belongs to the G-protein coupled receptor 1 family.

The protein localises to the cell membrane. Odorant receptor. In Homo sapiens (Human), this protein is Olfactory receptor 2AG2 (OR2AG2).